Consider the following 596-residue polypeptide: MITKRNIPCKKNWKYKKKSISLTLITICYMFLFLTSCKPGKQNSINLLLLLLNTLDNKNVNEKIEDSTNTDPSSNVNEEDENSINANANDNAPSDSDSSNPRSPDKNPVNPTSPNSSSADIGIKILSHSIFMAPTNLSSWGDLGQEERAQRIASSSYIKNQDIIVFEGLSHNNAEKILLEKIRSEYPYQTNVVGRTKKGWNATLGAYTTSPMANGGVIIVSKWPIEEKVQYIFNNSNCGQDQYYNKGFAYVKINKDGKKFHVIGTQLQAREPDCFNSGETIRKLQLNDIKSFIDSKDIPKDETVLITGDLNIIKGSNEYFDMISKLNVNEPRYVGVPFTLDTKTNALAAYYYEKEKPIYLDYILVSKLHAQPPVWQNLAYDPISNTTWKRSDGYTSYEFSDRYPVYGFIYADSSTPTKSGHKRKYDQVSFQSTFNRKFIQADHNKKDGWLKADTRIKTDFTKFNLLQENVSESNPSCMNSGSVRIESSYYLNYYWNWFIGAASGDYGYYTKFNNGSDSLGIKNLDNGCLKDGSRVAFYDWDTIGGGYYYLTVWDKGSWKEHLFLWVQSFLSSREIFYLHLDSNPPKDWSKDLIYHH.

The signal sequence occupies residues 1 to 36 (MITKRNIPCKKNWKYKKKSISLTLITICYMFLFLTS). The segment at 63–118 (KIEDSTNTDPSSNVNEEDENSINANANDNAPSDSDSSNPRSPDKNPVNPTSPNSSS) is disordered. Positions 67 to 76 (STNTDPSSNV) are enriched in polar residues. A compositionally biased stretch (low complexity) spans 83-118 (SINANANDNAPSDSDSSNPRSPDKNPVNPTSPNSSS).

It localises to the secreted. It carries out the reaction a sphingomyelin + H2O = phosphocholine + an N-acylsphing-4-enine + H(+). This chain is Sphingomyelinase C 1 (sph1), found in Leptospira interrogans serogroup Icterohaemorrhagiae serovar copenhageni (strain Fiocruz L1-130).